A 432-amino-acid chain; its full sequence is Ornithine aminotransferase, mitochondrial (432 aa).

Lysine 287 carries the post-translational modification N6-(pyridoxal phosphate)lysine.

The protein belongs to the class-III pyridoxal-phosphate-dependent aminotransferase family. Homotetramer. Pyridoxal 5'-phosphate serves as cofactor.

The protein resides in the mitochondrion matrix. The catalysed reaction is a 2-oxocarboxylate + L-ornithine = L-glutamate 5-semialdehyde + an L-alpha-amino acid. Its pathway is amino-acid biosynthesis; L-proline biosynthesis; L-glutamate 5-semialdehyde from L-ornithine: step 1/1. This Drosophila ananassae (Fruit fly) protein is Ornithine aminotransferase, mitochondrial (Oat).